The chain runs to 758 residues: 52 kDa repressor of the inhibitor of the protein kinase (758 aa).

The THAP-type zinc-finger motif lies at methionine 1–phenylalanine 86. The interval glutamine 116 to valine 141 is disordered. Phosphoserine is present on serine 563.

Interacts with DNAJC3, probably sequestring it.

In terms of biological role, upstream regulator of interferon-induced serine/threonine protein kinase R (PKR). May block the PKR-inhibitory function of DNAJC3, resulting in restoration of kinase activity and suppression of cell growth. In Mus musculus (Mouse), this protein is 52 kDa repressor of the inhibitor of the protein kinase.